Here is a 324-residue protein sequence, read N- to C-terminus: MIFSKISQVAHYVPQQLVTNNDLASIMDTSHEWIFSRTGIAERHISRDEMTSDLAIQVADQLLTQSGLKANAIDFIIVATISPDATMPSTAAKVQAAIAATSAFAFDMTAACSGFVFALAMADKLIASGAYQNGMVIGAETLSKLVNWQDRATAVLFGDGAGGVLLEASKDKHVLAETLHTDGARCQSLISGETSLSSPYSIGKKAIATIQMDGRAIFDFAIRDVSKSILTLMAQSDITKDDIDYCLLHQANRRILDKIARKIDVPREKFLENMMRYGNTSAASIPILLSEAVQKGQIRLDGTQKILLSGFGGGLTWGSLIVKI.

Residues Cys-112 and His-249 contribute to the active site. Positions 250–254 (QANRR) are ACP-binding. Asn-279 is a catalytic residue.

This sequence belongs to the thiolase-like superfamily. FabH family. Homodimer.

The protein localises to the cytoplasm. The catalysed reaction is malonyl-[ACP] + acetyl-CoA + H(+) = 3-oxobutanoyl-[ACP] + CO2 + CoA. Its pathway is lipid metabolism; fatty acid biosynthesis. Functionally, catalyzes the condensation reaction of fatty acid synthesis by the addition to an acyl acceptor of two carbons from malonyl-ACP. Catalyzes the first condensation reaction which initiates fatty acid synthesis and may therefore play a role in governing the total rate of fatty acid production. Possesses both acetoacetyl-ACP synthase and acetyl transacylase activities. Its substrate specificity determines the biosynthesis of branched-chain and/or straight-chain of fatty acids. The polypeptide is Beta-ketoacyl-[acyl-carrier-protein] synthase III (Streptococcus pyogenes serotype M6 (strain ATCC BAA-946 / MGAS10394)).